The following is a 304-amino-acid chain: Solute carrier family 25 member 34 (304 aa).

Solcar repeat units lie at residues 4-97 (VPPA…ACQA), 101-194 (QQPG…AKAW), and 204-295 (DSWL…LRKL). A run of 6 helical transmembrane segments spans residues 7–27 (AVDL…TNPL), 45–65 (TYPR…RADG), 98–120 (GLSQ…GAFV), 170–191 (VGGA…FASA), 206–226 (WLVA…VMTP), and 278–301 (LGPH…WGQH).

It belongs to the mitochondrial carrier (TC 2.A.29) family.

The protein localises to the mitochondrion inner membrane. It carries out the reaction a dicarboxylate(in) + sulfate(out) = a dicarboxylate(out) + sulfate(in). Its function is as follows. Putative antiporter that exchanges dicarboxylates and sulfur oxoanions across the inner membrane of mitochondria. The sequence is that of Solute carrier family 25 member 34 (SLC25A34) from Bos taurus (Bovine).